Here is a 113-residue protein sequence, read N- to C-terminus: Major basic nuclear protein 1 (113 aa).

The tract at residues 1–20 (MAPKMKAAMKAMKAPAMKGK) is disordered.

It localises to the nucleus. In Crypthecodinium cohnii (Dinoflagellate), this protein is Major basic nuclear protein 1 (HCc1).